The sequence spans 589 residues: TAF5-like RNA polymerase II p300/CBP-associated factor-associated factor 65 kDa subunit 5L (589 aa).

Positions 211–221 (ASGSSSRSENN) are enriched in polar residues. Residues 211–230 (ASGSSSRSENNGLEPPDMPS) form a disordered region. 6 WD repeats span residues 266-305 (NTEQ…LKSE), 340-379 (GHCG…NTVL), 382-421 (GHAY…PLRI), 424-463 (GHLA…SVRL), 466-505 (GHRG…LYKE), and 508-547 (GHTD…CSAP).

It belongs to the WD repeat TAF5 family. The PCAF complex is composed of a number of TBP-associated factors (TAFS), such as TAF5, TAF5L, TAF6, TAF6L, TAF9, TAF10 and TAF12, PCAF, and also PCAF-associated factors (PAFs), such as TADA2L/ADA2, TADA3L/ADA3 and SPT3. Component of the STAGA transcription coactivator-HAT complex, at least composed of SUPT3H, GCN5L2, TAF5L, TAF6L, SUPT7L, TADA3L, TAD1L, TAF10, TAF12, TRRAP and TAF9.

The protein localises to the nucleus. In terms of biological role, functions as a component of the PCAF complex. The PCAF complex is capable of efficiently acetylating histones in a nucleosomal context. The PCAF complex could be considered as the human version of the yeast SAGA complex. With TAF6L, acts as an epigenetic regulator essential for somatic reprogramming. Regulates target genes through H3K9ac deposition and MYC recruitment which trigger MYC regulatory network to orchestrate gene expression programs to control embryonic stem cell state. The chain is TAF5-like RNA polymerase II p300/CBP-associated factor-associated factor 65 kDa subunit 5L from Homo sapiens (Human).